Reading from the N-terminus, the 649-residue chain is Choline transporter-like protein 3 (649 aa).

Residues 33-53 (AWLFLFFLFWTGLVFIMGYSV) traverse the membrane as a helical segment. Asparagine 136 and asparagine 151 each carry an N-linked (GlcNAc...) asparagine glycan. 5 helical membrane passes run 213–233 (DTVL…MFTF), 235–255 (FITT…LLFV), 284–304 (LLGF…LIYV), 334–354 (LWTF…LLSL), and 384–404 (LIGL…AVAG). N-linked (GlcNAc...) asparagine glycans are attached at residues asparagine 414, asparagine 502, and asparagine 520. Helical transmembrane passes span 533 to 553 (FIIF…GLMA) and 562 to 582 (VWAV…HSFL).

Belongs to the CTL (choline transporter-like) family.

The protein resides in the membrane. In Bos taurus (Bovine), this protein is Choline transporter-like protein 3 (SLC44A3).